The sequence spans 256 residues: Homeobox-leucine zipper protein HOX28 (256 aa).

The segment at A56–D86 is disordered. Residues S58 to S67 are compositionally biased toward low complexity. Residues G91–Q150 constitute a DNA-binding region (homeobox). A leucine-zipper region spans residues K149–P193.

This sequence belongs to the HD-ZIP homeobox family. Class II subfamily. Expressed in seedlings, roots, stems and panicles.

It localises to the nucleus. Its function is as follows. Probable transcription factor. The sequence is that of Homeobox-leucine zipper protein HOX28 (HOX28) from Oryza sativa subsp. indica (Rice).